The primary structure comprises 1049 residues: Retinoblastoma-like protein 1 (1049 aa).

A phosphothreonine mark is found at T332, T369, and T385. Residues 385–584 form a domain A region; the sequence is TPVASATQSV…WEALRASANK (200 aa). The interval 385-944 is pocket; binds T and E1A; the sequence is TPVASATQSV…GRVKSFALKY (560 aa). Residues 585–779 are spacer; the sequence is VPSCEEVIFP…TQDAPLTGIS (195 aa). Residues S640, S650, S748, and S761 each carry the phosphoserine modification. The tract at residues 780–944 is domain B; sequence KPKRTGSLAL…GRVKSFALKY (165 aa). Phosphoserine is present on residues S959, S970, and S983. T992 is modified (phosphothreonine). Residues S1004 and S1022 each carry the phosphoserine modification.

The protein belongs to the retinoblastoma protein (RB) family. In terms of assembly, component of the DREAM complex (also named LINC complex) at least composed of E2F4, E2F5, LIN9, LIN37, LIN52, LIN54, MYBL1, MYBL2, RBL1, RBL2, RBBP4, TFDP1 and TFDP2. The complex exists in quiescent cells where it represses cell cycle-dependent genes. It dissociates in S phase when LIN9, LIN37, LIN52 and LIN54 form a subcomplex that binds to MYBL2. Interacts with AATF. Interacts with KDM5A. Interacts with KMT5B and KMT5C. Interacts with USP4. Interacts with RBBP9. Cell-cycle arrest properties are inactivated by phosphorylation on Thr-332, Ser-640, Ser-959 and Ser-970 by CDK4.

It is found in the nucleus. Functionally, key regulator of entry into cell division. Directly involved in heterochromatin formation by maintaining overall chromatin structure and, in particular, that of constitutive heterochromatin by stabilizing histone methylation. Recruits and targets histone methyltransferases KMT5B and KMT5C, leading to epigenetic transcriptional repression. Controls histone H4 'Lys-20' trimethylation. Probably acts as a transcription repressor by recruiting chromatin-modifying enzymes to promoters. Potent inhibitor of E2F-mediated trans-activation. May act as a tumor suppressor. The protein is Retinoblastoma-like protein 1 of Rattus norvegicus (Rat).